The following is a 393-amino-acid chain: Zinc-regulated GTPase metalloprotein activator 1 (393 aa).

Residues 16 to 23 carry the psi-PxLVp motif motif; the sequence is EDCPELVP. Residue 47-54 coordinates GTP; sequence GYLGAGKT. The Zn(2+) site is built by Cys-105, Cys-107, and Cys-108. The CXCC motif signature appears at 105 to 108; sequence CLCC. Residues 108 to 112 and 201 to 204 contribute to the GTP site; these read CSVKD and NKTD. The 104-residue stretch at 271–374 folds into the CobW C-terminal domain; the sequence is IVTVTFEVPG…VLQQLFLTAV (104 aa).

This sequence belongs to the SIMIBI class G3E GTPase family. ZNG1 subfamily. Present at high level in the nuclei of the ureteric bud cells in the developing kidneys.

The protein resides in the nucleus. The enzyme catalyses GTP + H2O = GDP + phosphate + H(+). Functionally, zinc chaperone that directly transfers zinc cofactor to target metalloproteins, thereby activating them. Catalyzes zinc insertion into the active site of methionine aminopeptidase METAP1, which function to cleave the initiator methionine from polypeptides during or after protein translation. Mechanistically, the N-terminal psi-PxLVp motif binds to the C6H2-type zinc finger of inactive form of METAP1. After formation of the docked complex, zinc is transferred from the CXCC motif in the GTPase domain of ZNG1 to the zinc binding site in the peptidase domain of METAP1 in a process requiring GTP hydrolysis. GTP/GDP exchange is required for release of active METAP1. This chain is Zinc-regulated GTPase metalloprotein activator 1 (Zng1), found in Mus musculus (Mouse).